A 424-amino-acid chain; its full sequence is Protein shisa-9 (424 aa).

An N-terminal signal peptide occupies residues 1-23 (MRRVLRLLLGCFLTELCARMCRA). Residues 24-149 (QERSGHGQLA…DPLHDPTKDK (126 aa)) lie on the Extracellular side of the membrane. N-linked (GlcNAc...) asparagine glycosylation is found at asparagine 45, asparagine 89, and asparagine 116. Residues 150-170 (TNLIVYIICGVVAVMVLVGIF) form a helical membrane-spanning segment. The Cytoplasmic segment spans residues 171-424 (TKLGLEKAHR…ITNSKTEVTV (254 aa)). Disordered regions lie at residues 333 to 373 (PRAF…TWDP) and 389 to 424 (LGIA…EVTV). 2 stretches are compositionally biased toward polar residues: residues 362-373 (YNSTANFKTWDP) and 402-424 (TRTQ…EVTV).

The protein belongs to the shisa family. SHISA9 subfamily. Component of some AMPA receptors (ionotropic glutamate receptors) complex, at least composed of some AMPA receptor (GRIA1, GRIA2 and/or GRIA3), CACNG2 and SHISA9, as well as low level of DLG4. In terms of tissue distribution, brain-specific. Mainly expressed in neurons, including in hippocampus, cerebral cortex, striatum, thalamus, olfactory bulb and cerebellum. Expressed in most brain structures during embryonic and postnatal development.

It localises to the cell projection. Its subcellular location is the dendritic spine membrane. The protein localises to the synapse. In terms of biological role, regulator of short-term neuronal synaptic plasticity in the dentate gyrus. Associates with AMPA receptors (ionotropic glutamate receptors) in synaptic spines and promotes AMPA receptor desensitization at excitatory synapses. The chain is Protein shisa-9 (Shisa9) from Mus musculus (Mouse).